The primary structure comprises 102 residues: Small ribosomal subunit protein uS10 (102 aa).

This sequence belongs to the universal ribosomal protein uS10 family. Part of the 30S ribosomal subunit.

Its function is as follows. Involved in the binding of tRNA to the ribosomes. The protein is Small ribosomal subunit protein uS10 of Thermotoga maritima (strain ATCC 43589 / DSM 3109 / JCM 10099 / NBRC 100826 / MSB8).